Reading from the N-terminus, the 232-residue chain is MHLLIPAAGSGRRFGADRNKLLLPLLGQPVLAWTLQAADQAQSITWIGIIGQPGDRADIEALVDQLQLATPVSWIQGGRERQESVFNGLRSLPSGAQQVLIHDGARCLATPTLFDRCSAALQTCPAFVAAVPVKDTIKQVAADGTIAATPDRSTLWAAQTPQGFTVESLLRCHRQGLEQQLAVTDDAALLEAFGLPVQIVEGEETNLKVTTPADLAIAELILKQRQFTAAIA.

The protein belongs to the IspD/TarI cytidylyltransferase family. IspD subfamily.

The catalysed reaction is 2-C-methyl-D-erythritol 4-phosphate + CTP + H(+) = 4-CDP-2-C-methyl-D-erythritol + diphosphate. It functions in the pathway isoprenoid biosynthesis; isopentenyl diphosphate biosynthesis via DXP pathway; isopentenyl diphosphate from 1-deoxy-D-xylulose 5-phosphate: step 2/6. Functionally, catalyzes the formation of 4-diphosphocytidyl-2-C-methyl-D-erythritol from CTP and 2-C-methyl-D-erythritol 4-phosphate (MEP). This Synechococcus elongatus (strain ATCC 33912 / PCC 7942 / FACHB-805) (Anacystis nidulans R2) protein is 2-C-methyl-D-erythritol 4-phosphate cytidylyltransferase.